Consider the following 89-residue polypeptide: Large ribosomal subunit protein bL27 (89 aa).

Residues 1-21 (MAHKKAGGSSRNGRDTEGRRL) form a disordered region.

Belongs to the bacterial ribosomal protein bL27 family.

The sequence is that of Large ribosomal subunit protein bL27 from Granulibacter bethesdensis (strain ATCC BAA-1260 / CGDNIH1).